Reading from the N-terminus, the 34-residue chain is Photosystem II reaction center protein Psb30 (34 aa).

The helical transmembrane segment at 7–27 (VAQLISLFLILTSGPAIIVLI) threads the bilayer.

Belongs to the Psb30/Ycf12 family. As to quaternary structure, PSII is composed of 1 copy each of membrane proteins PsbA, PsbB, PsbC, PsbD, PsbE, PsbF, PsbH, PsbI, PsbJ, PsbK, PsbL, PsbM, PsbT, PsbX, PsbY, PsbZ, Psb30/Ycf12, peripheral proteins of the oxygen-evolving complex and a large number of cofactors. It forms dimeric complexes.

The protein resides in the plastid. The protein localises to the chloroplast thylakoid membrane. Its function is as follows. A core subunit of photosystem II (PSII), probably helps stabilize the reaction center. The sequence is that of Photosystem II reaction center protein Psb30 from Rhodomonas salina (Cryptomonas salina).